The chain runs to 102 residues: Large ribosomal subunit protein bL21 (102 aa).

It belongs to the bacterial ribosomal protein bL21 family. As to quaternary structure, part of the 50S ribosomal subunit. Contacts protein L20.

Functionally, this protein binds to 23S rRNA in the presence of protein L20. This chain is Large ribosomal subunit protein bL21, found in Syntrophotalea carbinolica (strain DSM 2380 / NBRC 103641 / GraBd1) (Pelobacter carbinolicus).